Here is a 248-residue protein sequence, read N- to C-terminus: Cell division protein ZapD (248 aa).

The protein belongs to the ZapD family. As to quaternary structure, interacts with FtsZ.

The protein resides in the cytoplasm. In terms of biological role, cell division factor that enhances FtsZ-ring assembly. Directly interacts with FtsZ and promotes bundling of FtsZ protofilaments, with a reduction in FtsZ GTPase activity. The polypeptide is Cell division protein ZapD (Aliivibrio fischeri (strain ATCC 700601 / ES114) (Vibrio fischeri)).